The chain runs to 157 residues: Protein Smg homolog (157 aa).

It belongs to the Smg family.

The polypeptide is Protein Smg homolog (Shewanella sediminis (strain HAW-EB3)).